The chain runs to 127 residues: MAKPTRKRRVKKNIESGIAHIHATFNNTIVMITDVHGNAVAWSSAGALGFKGSRKSTPFAAQMASEAAAKSAQEHGLKTVEVTVKGPGSGRESAIRALAAAGLEVTAIRDVTPVPHNGARPPKRRRV.

The protein belongs to the universal ribosomal protein uS11 family. As to quaternary structure, part of the 30S ribosomal subunit. Interacts with proteins S7 and S18. Binds to IF-3.

Its function is as follows. Located on the platform of the 30S subunit, it bridges several disparate RNA helices of the 16S rRNA. Forms part of the Shine-Dalgarno cleft in the 70S ribosome. This chain is Small ribosomal subunit protein uS11, found in Streptococcus thermophilus (strain CNRZ 1066).